Consider the following 248-residue polypeptide: Ubiquinone biosynthesis O-methyltransferase (248 aa).

Positions 41, 72, 93, and 136 each coordinate S-adenosyl-L-methionine.

It belongs to the methyltransferase superfamily. UbiG/COQ3 family.

The enzyme catalyses a 3-demethylubiquinol + S-adenosyl-L-methionine = a ubiquinol + S-adenosyl-L-homocysteine + H(+). It carries out the reaction a 3-(all-trans-polyprenyl)benzene-1,2-diol + S-adenosyl-L-methionine = a 2-methoxy-6-(all-trans-polyprenyl)phenol + S-adenosyl-L-homocysteine + H(+). The protein operates within cofactor biosynthesis; ubiquinone biosynthesis. O-methyltransferase that catalyzes the 2 O-methylation steps in the ubiquinone biosynthetic pathway. This chain is Ubiquinone biosynthesis O-methyltransferase, found in Brucella melitensis biotype 2 (strain ATCC 23457).